Here is a 446-residue protein sequence, read N- to C-terminus: Phosphoglucosamine mutase (446 aa).

Ser99 (phosphoserine intermediate) is an active-site residue. Mg(2+) contacts are provided by Ser99, Asp242, Asp244, and Asp246. Residue Ser99 is modified to Phosphoserine.

The protein belongs to the phosphohexose mutase family. Mg(2+) is required as a cofactor. Activated by phosphorylation.

It catalyses the reaction alpha-D-glucosamine 1-phosphate = D-glucosamine 6-phosphate. Catalyzes the conversion of glucosamine-6-phosphate to glucosamine-1-phosphate. The sequence is that of Phosphoglucosamine mutase from Campylobacter fetus subsp. fetus (strain 82-40).